A 340-amino-acid chain; its full sequence is Ketol-acid reductoisomerase (NADP(+)) (340 aa).

The region spanning 3–182 (VTMYYEEDVE…GCARVGIIET (180 aa)) is the KARI N-terminal Rossmann domain. NADP(+) contacts are provided by residues 26-29 (YGSQ), Arg-49, Ser-53, and 83-86 (DELQ). His-108 is a catalytic residue. Residue Gly-134 participates in NADP(+) binding. The KARI C-terminal knotted domain occupies 183–328 (TFKEETEEDL…AELRKAMPFT (146 aa)). Mg(2+) is bound by residues Asp-191, Glu-195, Glu-227, and Glu-231. Ser-252 lines the substrate pocket.

Belongs to the ketol-acid reductoisomerase family. Requires Mg(2+) as cofactor.

The catalysed reaction is (2R)-2,3-dihydroxy-3-methylbutanoate + NADP(+) = (2S)-2-acetolactate + NADPH + H(+). It carries out the reaction (2R,3R)-2,3-dihydroxy-3-methylpentanoate + NADP(+) = (S)-2-ethyl-2-hydroxy-3-oxobutanoate + NADPH + H(+). The protein operates within amino-acid biosynthesis; L-isoleucine biosynthesis; L-isoleucine from 2-oxobutanoate: step 2/4. It participates in amino-acid biosynthesis; L-valine biosynthesis; L-valine from pyruvate: step 2/4. Its function is as follows. Involved in the biosynthesis of branched-chain amino acids (BCAA). Catalyzes an alkyl-migration followed by a ketol-acid reduction of (S)-2-acetolactate (S2AL) to yield (R)-2,3-dihydroxy-isovalerate. In the isomerase reaction, S2AL is rearranged via a Mg-dependent methyl migration to produce 3-hydroxy-3-methyl-2-ketobutyrate (HMKB). In the reductase reaction, this 2-ketoacid undergoes a metal-dependent reduction by NADPH to yield (R)-2,3-dihydroxy-isovalerate. This is Ketol-acid reductoisomerase (NADP(+)) from Lactococcus lactis subsp. cremoris (strain SK11).